Here is a 63-residue protein sequence, read N- to C-terminus: Large ribosomal subunit protein eL37 (63 aa).

4 residues coordinate Zn(2+): Cys20, Cys23, Cys35, and Cys38. The C4-type zinc finger occupies 20 to 38 (CRRCGRHSFNVRKGYCVAC).

This sequence belongs to the eukaryotic ribosomal protein eL37 family. Zn(2+) serves as cofactor.

In terms of biological role, binds to the 23S rRNA. The polypeptide is Large ribosomal subunit protein eL37 (Ignicoccus hospitalis (strain KIN4/I / DSM 18386 / JCM 14125)).